The primary structure comprises 249 residues: DNA polymerase sliding clamp (249 aa).

This sequence belongs to the PCNA family. Homotrimer. The subunits circularize to form a toroid; DNA passes through its center. Replication factor C (RFC) is required to load the toroid on the DNA.

In terms of biological role, sliding clamp subunit that acts as a moving platform for DNA processing. Responsible for tethering the catalytic subunit of DNA polymerase and other proteins to DNA during high-speed replication. The protein is DNA polymerase sliding clamp of Pyrococcus horikoshii (strain ATCC 700860 / DSM 12428 / JCM 9974 / NBRC 100139 / OT-3).